Reading from the N-terminus, the 507-residue chain is L-amino-acid oxidase (507 aa).

Positions 1–19 (MNVLFIFSLLFLAALESCA) are cleaved as a signal peptide. An intrachain disulfide couples cysteine 29 to cysteine 192. FAD-binding positions include 62–63 (MA), 82–83 (EA), arginine 90, and 106–109 (GPMR). Arginine 109 serves as a coordination point for substrate. Residues asparagine 191 and asparagine 213 are each glycosylated (N-linked (GlcNAc...) asparagine). Valine 280 is an FAD binding site. Cysteine 348 and cysteine 429 are joined by a disulfide. N-linked (GlcNAc...) asparagine glycosylation occurs at asparagine 378. Substrate is bound at residue tyrosine 389. Residues glutamate 473 and 480–485 (GWIDST) each bind FAD.

Belongs to the flavin monoamine oxidase family. FIG1 subfamily. Homodimer; non-covalently linked. Requires FAD as cofactor. Expressed by the venom gland.

The protein localises to the secreted. It carries out the reaction an L-alpha-amino acid + O2 + H2O = a 2-oxocarboxylate + H2O2 + NH4(+). The enzyme catalyses L-leucine + O2 + H2O = 4-methyl-2-oxopentanoate + H2O2 + NH4(+). Its function is as follows. Catalyzes an oxidative deamination of predominantly hydrophobic and aromatic L-amino acids, thus producing hydrogen peroxide that may contribute to the diverse toxic effects of this enzyme. Shows activity on L-Leu. Exhibits diverse biological activities, such as hemorrhage, hemolysis, edema, apoptosis of vascular endothelial cells or tumor cell lines, antibacterial and antiparasitic activities. This protein induces platelet aggregation by both hydrogen peroxide production and binding to platelet membrane proteins (that would enhance the sensitivity of platelets to hydrogen peroxide). Effects of snake L-amino oxidases on platelets are controversial, since they either induce aggregation or inhibit agonist-induced aggregation. These different effects are probably due to different experimental conditions. This chain is L-amino-acid oxidase, found in Naja atra (Chinese cobra).